A 5207-amino-acid polypeptide reads, in one-letter code: E3 ubiquitin-protein ligase RNF213 (5207 aa).

2 disordered regions span residues methionine 1–glutamine 20 and proline 27–valine 365. A compositionally biased stretch (polar residues) spans serine 34 to serine 43. Positions lysine 89–asparagine 100 are enriched in basic residues. Low complexity-rich tracts occupy residues lysine 101–proline 117 and serine 136–proline 157. Positions serine 188–glutamine 197 are enriched in polar residues. Phosphoserine occurs at positions 208 and 217. Residues glycine 248–alanine 266 show a composition bias toward polar residues. 3 stretches are compositionally biased toward basic and acidic residues: residues alanine 285 to glutamine 294, histidine 309 to asparagine 346, and lysine 353 to glutamate 362. A coiled-coil region spans residues glutamate 343–serine 374. Residue lysine 1151 forms a Glycyl lysine isopeptide (Lys-Gly) (interchain with G-Cter in SUMO2) linkage. Serine 1258 carries the post-translational modification Phosphoserine. Residues glycine 1995 to leucine 2000, glutamate 2098, aspartate 2155, and arginine 2216 contribute to the ATP site. A Phosphoserine modification is found at serine 2273. ATP-binding residues include lysine 2499 and serine 2574. Positions 3997, 4000, 4012, 4014, 4017, 4020, 4032, 4035, 4505, and 4509 each coordinate Zn(2+). The segment at cysteine 3997–leucine 4036 adopts an RING-type zinc-finger fold. An RZ-type zinc finger spans residues methionine 4483–threonine 4555. Cysteine 4516 functions as the Nucleophile; for E3 ubiquitin-lipopolysaccharide ligase activity in the catalytic mechanism. Positions 4525 and 4528 each coordinate Zn(2+).

This sequence belongs to the AAA ATPase family. Monomer. Interacts with UBE2L3/UBCH7; UBE2L3/UBCH7 is the most efficient ubiquitin-conjugating enzyme E2 for the ubiquitin ligase activity. Interacts with UBE2N/UBC13; promoting 'Lys-63'-linked ubiquitination of target proteins. In terms of assembly, (Microbial infection) Interacts with M.tuberculosis protein Rv3655c, which impairs caspase-8 activation and suppresses macrophage apoptosis by blocking the extrinsic pathway. In terms of processing, autoubiquitinated. As to expression, widely expressed (at protein level). Major isoform detected in all tissues examined. In terms of tissue distribution, minor isoform with restricted expression.

Its subcellular location is the cytoplasm. The protein resides in the cytosol. The protein localises to the lipid droplet. It carries out the reaction S-ubiquitinyl-[E2 ubiquitin-conjugating enzyme]-L-cysteine + [acceptor protein]-L-lysine = [E2 ubiquitin-conjugating enzyme]-L-cysteine + N(6)-ubiquitinyl-[acceptor protein]-L-lysine.. The enzyme catalyses ATP + H2O = ADP + phosphate + H(+). The protein operates within protein modification; protein ubiquitination. Atypical E3 ubiquitin ligase that can catalyze ubiquitination of both proteins and lipids, and which is involved in various processes, such as lipid metabolism, angiogenesis and cell-autonomous immunity. Acts as a key immune sensor by catalyzing ubiquitination of the lipid A moiety of bacterial lipopolysaccharide (LPS) via its RZ-type zinc-finger: restricts the proliferation of cytosolic bacteria, such as Salmonella, by generating the bacterial ubiquitin coat through the ubiquitination of LPS. Also acts indirectly by mediating the recruitment of the LUBAC complex, which conjugates linear polyubiquitin chains. Ubiquitination of LPS triggers cell-autonomous immunity, such as antibacterial autophagy, leading to degradation of the microbial invader. Involved in lipid metabolism by regulating fat storage and lipid droplet formation; act by inhibiting the lipolytic process. Also regulates lipotoxicity by inhibiting desaturation of fatty acids. Also acts as an E3 ubiquitin-protein ligase via its RING-type zinc finger: mediates 'Lys-63'-linked ubiquitination of target proteins. Involved in the non-canonical Wnt signaling pathway in vascular development: acts by mediating ubiquitination and degradation of FLNA and NFATC2 downstream of RSPO3, leading to inhibit the non-canonical Wnt signaling pathway and promoting vessel regression. Also has ATPase activity; ATPase activity is required for ubiquitination of LPS. The polypeptide is E3 ubiquitin-protein ligase RNF213 (Homo sapiens (Human)).